The sequence spans 663 residues: Zinc finger protein 44 (663 aa).

The KRAB domain maps to 52 to 138 (VAFEDVAVNF…GETLSQIRNS (87 aa)). The C2H2-type 1; atypical zinc finger occupies 189–211 (YTHKQCGKGLSYRHSFQTCERPH). The segment at 217–239 (YDCKECGKTFSSPGNLRRHMVVK) adopts a C2H2-type 2; degenerate zinc-finger fold. 15 C2H2-type zinc fingers span residues 245–267 (YKCE…ERTH), 273–295 (YECK…EKIH), 301–323 (YECK…ERTH), 329–351 (YKCK…ERIH), 357–379 (YTCK…MIMH), 385–407 (HKCK…EGTH), 413–435 (YECK…MMAH), 441–463 (HKCT…ERTH), 469–491 (YECK…ETTH), 497–518 (YKCK…ETTH), 524–546 (YECK…ERTH), 552–574 (YECQ…ERTH), 580–602 (YECK…ERTH), 608–630 (YECK…ERTH), and 636–658 (YECK…KRTH).

Belongs to the krueppel C2H2-type zinc-finger protein family.

The protein resides in the nucleus. May be involved in transcriptional regulation. This chain is Zinc finger protein 44 (ZNF44), found in Homo sapiens (Human).